The chain runs to 390 residues: Endoglucanase gh5-1 (390 aa).

The signal sequence occupies residues Met1–Ala16. Residues Gln17–Gln52 enclose the CBM1 domain. Asn157 and Asn261 each carry an N-linked (GlcNAc...) asparagine glycan.

This sequence belongs to the glycosyl hydrolase 5 (cellulase A) family. N-glycosylated.

Its subcellular location is the secreted. It carries out the reaction Endohydrolysis of (1-&gt;4)-beta-D-glucosidic linkages in cellulose, lichenin and cereal beta-D-glucans.. Endoglucanase that plays an important role in biomass degradation. Binds onto plant cell walls to participate in the hydrolysis of cellulose. This is Endoglucanase gh5-1 from Neurospora crassa (strain ATCC 24698 / 74-OR23-1A / CBS 708.71 / DSM 1257 / FGSC 987).